The primary structure comprises 477 residues: Regulator of G-protein signaling 7 (477 aa).

In terms of domain architecture, DEP spans 37–112; sequence EKNGIPIRTV…DDGTFYRFQT (76 aa). Phosphoserine occurs at positions 229 and 241. The interval 236-257 is disordered; it reads DIRSHSPTHTPTPETKPPTEDE. Threonine 243 carries the post-translational modification Phosphothreonine. One can recognise a G protein gamma domain in the interval 255-316; that stretch reads EDELHRQIKY…LSDDTTFWEL (62 aa). The 116-residue stretch at 333–448 folds into the RGS domain; it reads GMDEALKDPV…IRSSAYQELL (116 aa). Position 434 is a phosphoserine (serine 434).

In terms of assembly, interacts with GNB5, forming the RGS7-GNB5 complex. Interacts with GPR158; promotes the GTPase activator activity of the RGS7-GNB5 complex in absence of glycine, in contrast GTPase activator activity of the RGS7-GNB5 complex is inhibited in presence of glycine. Interacts with GPR179. Interacts with PKD1; this prevents rapid proteasomal degradation. Interacts with RGS7BP, leading to regulate the subcellular location of the heterodimer formed with GNB5. Interacts (phosphorylated form) with 14-3-3 protein YWHAQ. Interacts with SNAPIN. Interacts with GNAI1. Interacts with GNAO1, GNAI3 and GNAZ. In terms of processing, palmitoylated. Post-translationally, ubiquitinated, leading to rapid proteasomal degradation. Phosphorylation and subsequent interaction with 14-3-3 proteins inhibits GAP activity. In terms of tissue distribution, brain-specific. Predominantly cerebellar granule cells.

The protein resides in the cytoplasm. It localises to the cytosol. It is found in the cell membrane. Its subcellular location is the membrane. GTPase activator component of the RGS7-GNB5 complex that regulates G protein-coupled receptor signaling cascades. The RGS7-GNB5 complex acts as an inhibitor signal transduction by promoting the GTPase activity of G protein alpha subunits, such as GNAO1, thereby driving them into their inactive GDP-bound form. May play a role in synaptic vesicle exocytosis. Glycine-dependent regulation of the RGS7-GNB5 complex by GPR158 affects mood and cognition via its ability to regulate neuronal excitability in L2/L3 pyramidal neurons of the prefrontal cortex. Modulates the activity of potassium channels that are activated by GNAO1 in response to muscarinic acetylcholine receptor M2/CHRM2 signaling. The chain is Regulator of G-protein signaling 7 (Rgs7) from Rattus norvegicus (Rat).